A 161-amino-acid polypeptide reads, in one-letter code: MKYAHVGLNVTNLEKSIEFYSKLFGAEPVKVKPDYAKFLLESPGLNFTLNLRDEVNGNQVGHFGIQVESTEEVVAHKNRLAENGILSQYDEINTTCCYALQDKFWIHDPDGNEWEFFYTKTTVEENSTHPPTCCVNEPNVEKAECCSPTASSNKDTSNCCS.

Residues lysine 2 to threonine 119 enclose the VOC domain. The Fe(2+) site is built by histidine 5 and histidine 62. Positions 96 and 97 each coordinate roxarsone (III). Residue glutamate 115 participates in Fe(2+) binding.

Fe(2+) is required as a cofactor.

The catalysed reaction is methylarsonous acid + AH2 + O2 = arsenite + methanol + A + H(+). It carries out the reaction roxarsone (III) + AH2 + O2 = 4-hydroxy-3-nitrocyclohexa-2,5-dien-1-one + arsenite + A + H(+). It catalyses the reaction nitarsone (III) + AH2 + O2 = 4-nitrocyclohexa-2,5-dien-1-one + arsenite + A + H(+). The enzyme catalyses 4-aminophenylarsonous acid + AH2 + O2 = 4-aminocyclohexa-2,5-dien-1-one + arsenite + A. Its activity is regulated as follows. Inhibited in vitro by reagents that chemically modify histidine residues (diethylpyrocarbonate (DEPC)), aspartate or glutamate residues (1-ethyl-3-(3-(dimethylamino)propyl) carbodiimide (EDC)), or cysteine residues (N-ethylmaleimide (NEM) or iodoacetamide (IAA)). Functionally, nonheme iron-dependent dioxygenase that can break carbon-arsenic bonds, playing a role in the detoxification of environmental organoarsenical compounds. Catalyzes the oxygen-dependent demethylation of highly toxic methylarsonous acid (MAs(III)) to arsenite, which can then be exported out of the cell. Can also cleave the C-As bond in several trivalent aromatic arsenicals, including roxarsone (III), nitarsone (III) and (4-aminophenyl)arsonous acid. Organoarsenical degradation by this enzyme is proposed to have a significant impact on the arsenic biogeocycle that maintains a balance between organic and inorganic species. This is Trivalent organoarsenical cleaving enzyme from Bacillus sp. (strain MD1).